The sequence spans 224 residues: Holliday junction branch migration complex subunit RuvA (224 aa).

The tract at residues 1-67 (MISWLKGEKV…EDGTSLYGFI (67 aa)) is domain I. The tract at residues 68 to 146 (EVNQRDLFRE…RFTDNDKTIH (79 aa)) is domain II. The tract at residues 147-155 (ENKKGIEAN) is flexible linker. The domain III stretch occupies residues 156 to 224 (QFSKYIDEIY…ILMKLSEKTT (69 aa)).

Belongs to the RuvA family. As to quaternary structure, homotetramer. Forms an RuvA(8)-RuvB(12)-Holliday junction (HJ) complex. HJ DNA is sandwiched between 2 RuvA tetramers; dsDNA enters through RuvA and exits via RuvB. An RuvB hexamer assembles on each DNA strand where it exits the tetramer. Each RuvB hexamer is contacted by two RuvA subunits (via domain III) on 2 adjacent RuvB subunits; this complex drives branch migration. In the full resolvosome a probable DNA-RuvA(4)-RuvB(12)-RuvC(2) complex forms which resolves the HJ.

The protein localises to the cytoplasm. Functionally, the RuvA-RuvB-RuvC complex processes Holliday junction (HJ) DNA during genetic recombination and DNA repair, while the RuvA-RuvB complex plays an important role in the rescue of blocked DNA replication forks via replication fork reversal (RFR). RuvA specifically binds to HJ cruciform DNA, conferring on it an open structure. The RuvB hexamer acts as an ATP-dependent pump, pulling dsDNA into and through the RuvAB complex. HJ branch migration allows RuvC to scan DNA until it finds its consensus sequence, where it cleaves and resolves the cruciform DNA. The sequence is that of Holliday junction branch migration complex subunit RuvA from Prochlorococcus marinus (strain NATL1A).